The chain runs to 143 residues: 18 kDa heat shock protein (143 aa).

The region spanning 23 to 135 (TWSRPTAMPM…KRRRVKVGQG (113 aa)) is the sHSP domain.

This sequence belongs to the small heat shock protein (HSP20) family.

The protein is 18 kDa heat shock protein (hsp18) of Streptomyces albus G.